Consider the following 1397-residue polypeptide: ABC transporter B family member 2 (1397 aa).

Positions 1–117 are disordered; that stretch reads MSDKSNDGGE…KLDEGEKKEG (117 aa). A compositionally biased stretch (acidic residues) spans 24-39; that stretch reads IDDENNNDINNQDDNE. Positions 37–69 form a coiled coil; that stretch reads DNENNNNNNNNKNSDDNEENLKDYKNKKEDFGN. Composition is skewed to basic and acidic residues over residues 49–79 and 107–117; these read NSDD…DDRP and KKLDEGEKKEG. 5 consecutive transmembrane segments (helical) span residues 137 to 157, 191 to 211, 273 to 293, 369 to 389, and 407 to 427; these read ILLM…MPAI, FIYI…FWML, FICG…VIFA, GIGI…SFWY, and WQGG…MALG. In terms of domain architecture, ABC transmembrane type-1 1 spans 140–438; sequence MIIGTIGALA…ASPNVASFAN (299 aa). Positions 474–710 constitute an ABC transporter 1 domain; sequence IEYRNIGFSY…NGVYTQLVNR (237 aa). Residue 509–516 coordinates ATP; that stretch reads GDSGGGKS. Disordered stretches follow at residues 710–744 and 763–783; these read RQQK…SSIS and GLVN…PQEK. Residues 735 to 744 show a composition bias toward low complexity; the sequence is NNNIGPSSIS. 6 helical membrane passes run 801–821, 846–866, 922–942, 948–968, 1028–1048, and 1101–1121; these read FLIG…FSII, LWFI…IYCF, LGLL…AFVS, LVVL…MDFF, GLSF…TYWY, and VFFA…FMPD. The ABC transmembrane type-1 2 domain maps to 801–1124; that stretch reads FLIGLVGATL…SMAFMPDLGK (324 aa). In terms of domain architecture, ABC transporter 2 spans 1159 to 1395; the sequence is IEFKDIKFSY…NGFYAELVSR (237 aa). 1194–1201 serves as a coordination point for ATP; it reads GNSGGGKS.

The protein belongs to the ABC transporter superfamily. ABCB family. Multidrug resistance exporter (TC 3.A.1.201) subfamily.

The protein resides in the membrane. The polypeptide is ABC transporter B family member 2 (abcB2) (Dictyostelium discoideum (Social amoeba)).